The primary structure comprises 86 residues: Large ribosomal subunit protein bL31B (86 aa).

This sequence belongs to the bacterial ribosomal protein bL31 family. Type B subfamily. In terms of assembly, part of the 50S ribosomal subunit.

This is Large ribosomal subunit protein bL31B from Vibrio vulnificus (strain YJ016).